The following is a 989-amino-acid chain: Phosphoenolpyruvate carboxylase (989 aa).

Catalysis depends on residues His175 and Lys630.

Belongs to the PEPCase type 1 family. Mg(2+) serves as cofactor.

The enzyme catalyses oxaloacetate + phosphate = phosphoenolpyruvate + hydrogencarbonate. Functionally, forms oxaloacetate, a four-carbon dicarboxylic acid source for the tricarboxylic acid cycle. This Prochlorococcus marinus subsp. pastoris (strain CCMP1986 / NIES-2087 / MED4) protein is Phosphoenolpyruvate carboxylase.